The primary structure comprises 507 residues: Alkyl hydroperoxide reductase subunit F (507 aa).

Residue 207–222 (DVLIVGGGPASGSAAI) coordinates FAD. Residues Cys335 and Cys338 are joined by a disulfide bond. NAD(+) is bound at residue 347–361 (DVAVIGGGNSGVEAA). FAD is bound at residue 467-477 (TNVPGIFAAGD).

The protein belongs to the class-II pyridine nucleotide-disulfide oxidoreductase family. In terms of assembly, homodimer. It depends on FAD as a cofactor.

Its function is as follows. Serves to protect the cell against DNA damage by alkyl hydroperoxides. It can use either NADH or NADPH as electron donor for direct reduction of redox dyes or of alkyl hydroperoxides when combined with the AhpC protein. This chain is Alkyl hydroperoxide reductase subunit F (ahpF), found in Staphylococcus aureus (strain MRSA252).